The chain runs to 260 residues: Serine hydroxymethyltransferase (260 aa).

K60 carries the post-translational modification N6-(pyridoxal phosphate)lysine.

It belongs to the SHMT family. As to quaternary structure, homodimer. Pyridoxal 5'-phosphate serves as cofactor.

It is found in the cytoplasm. It catalyses the reaction (6R)-5,10-methylene-5,6,7,8-tetrahydrofolate + glycine + H2O = (6S)-5,6,7,8-tetrahydrofolate + L-serine. It functions in the pathway one-carbon metabolism; tetrahydrofolate interconversion. Its pathway is amino-acid biosynthesis; glycine biosynthesis; glycine from L-serine: step 1/1. Catalyzes the reversible interconversion of serine and glycine with tetrahydrofolate (THF) serving as the one-carbon carrier. This reaction serves as the major source of one-carbon groups required for the biosynthesis of purines, thymidylate, methionine, and other important biomolecules. Also exhibits THF-independent aldolase activity toward beta-hydroxyamino acids, producing glycine and aldehydes, via a retro-aldol mechanism. The chain is Serine hydroxymethyltransferase from Corynebacterium sp. (strain P-1).